Consider the following 185-residue polypeptide: Erythropoietin (185 aa).

Positions 1–22 (MLQKRGRGLLVLLLMLLEWTRP) are cleaved as a signal peptide. 2 cysteine pairs are disulfide-bonded: C32/C180 and C54/C58.

It belongs to the EPO/TPO family.

It localises to the secreted. Its function is as follows. Erythropoietin is the principal hormone involved in the regulation of erythrocyte differentiation and the maintenance of a physiological level of circulating erythrocyte mass. In Epinephelus coioides (Orange-spotted grouper), this protein is Erythropoietin (epo).